The sequence spans 191 residues: Small ribosomal subunit protein uS5 (191 aa).

Residues 1-20 (MAGERERGGRERSRDREERD) form a disordered region. Residues 23–86 (FVDKLVHINR…ESAKRNLTRV (64 aa)) form the S5 DRBM domain.

This sequence belongs to the universal ribosomal protein uS5 family. Part of the 30S ribosomal subunit. Contacts proteins S4 and S8.

Functionally, with S4 and S12 plays an important role in translational accuracy. In terms of biological role, located at the back of the 30S subunit body where it stabilizes the conformation of the head with respect to the body. In Nitrobacter winogradskyi (strain ATCC 25391 / DSM 10237 / CIP 104748 / NCIMB 11846 / Nb-255), this protein is Small ribosomal subunit protein uS5.